A 278-amino-acid polypeptide reads, in one-letter code: Putative phosphoenolpyruvate synthase regulatory protein (278 aa).

ADP is bound at residue 158–165 (GVSRSGKT).

The protein belongs to the pyruvate, phosphate/water dikinase regulatory protein family. PSRP subfamily.

It carries out the reaction [pyruvate, water dikinase] + ADP = [pyruvate, water dikinase]-phosphate + AMP + H(+). The catalysed reaction is [pyruvate, water dikinase]-phosphate + phosphate + H(+) = [pyruvate, water dikinase] + diphosphate. Bifunctional serine/threonine kinase and phosphorylase involved in the regulation of the phosphoenolpyruvate synthase (PEPS) by catalyzing its phosphorylation/dephosphorylation. This is Putative phosphoenolpyruvate synthase regulatory protein from Acinetobacter baylyi (strain ATCC 33305 / BD413 / ADP1).